The sequence spans 152 residues: MSTINTDTNEAMPHISVNAQYIKDLSLENPSAPSSLAALDQRPQIDLSLDINITNLSEENFYEVELNIEATARNEKYKLFHIELKYAGVFNLINIDSEQHPILLSVHCPAMIFPFARKIISSCTQDAGFQPLMIDPIDFGALYHKKMSEHQN.

This sequence belongs to the SecB family. In terms of assembly, homotetramer, a dimer of dimers. One homotetramer interacts with 1 SecA dimer.

The protein localises to the cytoplasm. In terms of biological role, one of the proteins required for the normal export of preproteins out of the cell cytoplasm. It is a molecular chaperone that binds to a subset of precursor proteins, maintaining them in a translocation-competent state. It also specifically binds to its receptor SecA. This is Protein-export protein SecB from Rickettsia akari (strain Hartford).